We begin with the raw amino-acid sequence, 33 residues long: Mu-theraphotoxin-Os1a (33 aa).

Intrachain disulfides connect cysteine 2/cysteine 17, cysteine 9/cysteine 22, and cysteine 16/cysteine 29. Leucine 33 bears the Leucine amide mark.

This sequence belongs to the neurotoxin 10 (Hwtx-1) family. 14 (Hntx-1) subfamily. Monomer. Expressed by the venom gland.

It localises to the secreted. Potently and reversibly inhibits some human voltage-gated sodium channels (Nav1.1/SCN1A (IC(50)=72.0 nM), Nav1.2/SCN2A (IC(50)=75.5 nM), Nav1.6/SCN8A (IC(50)=115.0 nM), Nav1.7/SCN9A (IC(50)=52.7-129.5 nM), Nav1.3/SCN3A (IC(50)=306.6 nM)). The hNav1.7/SCN9A channel inhibition occurs without any change in steady-state inactivation- and conductance-voltage relationships. On adult mouse DRG neurons, this toxin is approximately 1000-fold more efficient to inhibit tetrodotoxin (TTX)-sensitive than TTX-resistant sodium currents. In vivo, this toxin exhibits analgesic effects in mice pain models. The polypeptide is Mu-theraphotoxin-Os1a (Omothymus schioedtei (Malaysian earth tiger tarantula)).